We begin with the raw amino-acid sequence, 362 residues long: E3 ubiquitin-protein ligase TM129 (362 aa).

At 1–6 the chain is on the lumenal side; that stretch reads MDSPEV. A helical transmembrane segment spans residues 7–27; the sequence is TFTLAYLVFAVCFVFTPNEFY. Residues 28–56 are Cytoplasmic-facing; the sequence is SAGLTVQNLLSGWLGSEDAAFVPYHLRRT. The chain crosses the membrane as a helical span at residues 57 to 77; the sequence is SATLLCHSLLPLGYYMGMCFA. The Lumenal portion of the chain corresponds to 78-94; it reads ASEKQLYSPGQAPEAWQ. Residues 95–115 traverse the membrane as a helical segment; sequence LFLLLAVTLPLLSCTLIYYWS. Residues 116–362 are Cytoplasmic-facing; it reads WDRWTRHPLA…FCILDVCCVR (247 aa). An RING-type; degenerate zinc finger spans residues 285–350; that stretch reads CIGCMQTRAS…ASRVPCPTCR (66 aa).

It belongs to the TMEM129 family. As to quaternary structure, integral component of ER-resident dislocation complexes.

The protein localises to the endoplasmic reticulum membrane. It carries out the reaction S-ubiquitinyl-[E2 ubiquitin-conjugating enzyme]-L-cysteine + [acceptor protein]-L-lysine = [E2 ubiquitin-conjugating enzyme]-L-cysteine + N(6)-ubiquitinyl-[acceptor protein]-L-lysine.. Its pathway is protein modification; protein ubiquitination. Functionally, E3 ubiquitin-protein ligase involved in ER-associated protein degradation, preferentially associates with the E2 enzyme UBE2J2. Exploited by viral US11 proteins to mediate HLA class I proteins degradation. The protein is E3 ubiquitin-protein ligase TM129 (Tmem129) of Mus musculus (Mouse).